The sequence spans 526 residues: Rho guanine nucleotide exchange factor 3 (526 aa).

Positions E20 to K40 are disordered. Phosphoserine is present on residues S47 and S70. The DH domain occupies K122–K304. In terms of domain architecture, PH spans I291–E449. 2 disordered regions span residues E464–V502 and E507–V526. Residues S466–R475 show a composition bias toward polar residues.

As to quaternary structure, interacts with RHOA and RHOB.

Its subcellular location is the cytoplasm. Its function is as follows. Acts as a guanine nucleotide exchange factor (GEF) for RhoA and RhoB GTPases. The chain is Rho guanine nucleotide exchange factor 3 (ARHGEF3) from Macaca fascicularis (Crab-eating macaque).